A 323-amino-acid polypeptide reads, in one-letter code: Secreted frizzled-related protein 3 (323 aa).

An N-terminal signal peptide occupies residues 1–32 (MVCCGPGRMLLGWAGLLVLAALCLLQVPGAQA). Residues 33–150 (AACEPVRIPL…VYDRGVCISP (118 aa)) form the FZ domain. 5 disulfide bridges follow: C35/C96, C43/C89, C80/C119, C108/C147, and C112/C136. N49 carries an N-linked (GlcNAc...) asparagine glycan. An NTR domain is found at 178 to 298 (CKCKPVRATQ…WDMKLRHLGL (121 aa)). The segment at 299–323 (GKTDASDSTQNQKSGRNSNPRPARS) is disordered. Over residues 304 to 323 (SDSTQNQKSGRNSNPRPARS) the composition is skewed to polar residues.

The protein belongs to the secreted frizzled-related protein (sFRP) family. As to quaternary structure, interacts with MYOC. As to expression, expressed in kidney, brain, testis. Weak expression in spleen and heart.

It localises to the secreted. Functionally, soluble frizzled-related proteins (sFRPS) function as modulators of Wnt signaling through direct interaction with Wnts. They have a role in regulating cell growth and differentiation in specific cell types. SFRP3/FRZB appears to be involved in limb skeletogenesis. Antagonist of Wnt8 signaling. Regulates chondrocyte maturation and long bone development. In Mus musculus (Mouse), this protein is Secreted frizzled-related protein 3 (Frzb).